Reading from the N-terminus, the 549-residue chain is CTP synthase (549 aa).

Positions 1 to 272 are amidoligase domain; that stretch reads MPPKSSTTKH…DAYVVRRMDL (272 aa). CTP is bound at residue Ser19. A UTP-binding site is contributed by Ser19. ATP contacts are provided by residues 20-25 and Asp77; that span reads SLGKGL. Mg(2+) contacts are provided by Asp77 and Glu146. Residues 153-155, 193-198, and Lys229 contribute to the CTP site; these read DIE and KTKPTQ. Residues 193 to 198 and Lys229 each bind UTP; that span reads KTKPTQ. The 248-residue stretch at 301–548 folds into the Glutamine amidotransferase type-1 domain; that stretch reads VGKYIDLPDA…VKAAVERKTS (248 aa). Residue Gly360 participates in L-glutamine binding. Cys387 acts as the Nucleophile; for glutamine hydrolysis in catalysis. L-glutamine contacts are provided by residues 388–391, Glu411, and Arg473; that span reads LGLQ. Active-site residues include His521 and Glu523.

This sequence belongs to the CTP synthase family. In terms of assembly, homotetramer.

The enzyme catalyses UTP + L-glutamine + ATP + H2O = CTP + L-glutamate + ADP + phosphate + 2 H(+). It catalyses the reaction L-glutamine + H2O = L-glutamate + NH4(+). The catalysed reaction is UTP + NH4(+) + ATP = CTP + ADP + phosphate + 2 H(+). The protein operates within pyrimidine metabolism; CTP biosynthesis via de novo pathway; CTP from UDP: step 2/2. Allosterically activated by GTP, when glutamine is the substrate; GTP has no effect on the reaction when ammonia is the substrate. The allosteric effector GTP functions by stabilizing the protein conformation that binds the tetrahedral intermediate(s) formed during glutamine hydrolysis. Inhibited by the product CTP, via allosteric rather than competitive inhibition. Functionally, catalyzes the ATP-dependent amination of UTP to CTP with either L-glutamine or ammonia as the source of nitrogen. Regulates intracellular CTP levels through interactions with the four ribonucleotide triphosphates. The protein is CTP synthase of Streptomyces coelicolor (strain ATCC BAA-471 / A3(2) / M145).